Here is a 92-residue protein sequence, read N- to C-terminus: Small ribosomal subunit protein uS19 (92 aa).

It belongs to the universal ribosomal protein uS19 family.

Protein S19 forms a complex with S13 that binds strongly to the 16S ribosomal RNA. In Methylobacterium sp. (strain 4-46), this protein is Small ribosomal subunit protein uS19.